The following is a 1415-amino-acid chain: Non-structural polyprotein 1AB (1415 aa).

Positions 104 to 142 (KLIHKANALQERLRLSQEEKATLALDVQFLQHENVRLKE) form a coiled coil. 5 consecutive transmembrane segments (helical) span residues 154–174 (MKWIIVGAVLTFLSLIPGGYA), 239–259 (VFYYIHYYEMWNIFMFVLAIG), 286–306 (VLPTIPFHTTMTLWVMNTLMV), 313–333 (LLAITLAILAPILGIIFLCFM), and 344–364 (GLIATAVLIAGGHACLTLTGT). Active-site charge relay system; for serine protease activity residues include histidine 461, aspartate 489, and serine 551. Residues 587–616 (VKAPSRVELLKEEIERLKAQLNSAAENPAT) adopt a coiled-coil conformation. At tyrosine 693 the chain carries O-(5'-phospho-RNA)-tyrosine. The interval 753–813 (FDQAKPTPAP…KNEPQPYSQT (61 aa)) is disordered. Basic and acidic residues predominate over residues 783–795 (SQKKEKQLEHEQQ). Positions 800–813 (TKPQKNEPQPYSQT) are enriched in polar residues. The RdRp catalytic domain maps to 1160–1286 (KHFIEFDWTR…TTPSVPDDYE (127 aa)).

It belongs to the astroviridae polyprotein 1AB family. Monomer. In terms of processing, cleaved by the viral and host proteases. The protease is probably autocatalytically cleaved.

Its subcellular location is the host membrane. The catalysed reaction is RNA(n) + a ribonucleoside 5'-triphosphate = RNA(n+1) + diphosphate. Responsible for the cleavage of the polyprotein into functional products. Functionally, covalently attached to the 5' extremity of the genomic and subgenomic RNAs. It may serve as a primer for the replicase. The sequence is that of Non-structural polyprotein 1AB (ORF1) from Human astrovirus-4 (HAstV-4).